The primary structure comprises 288 residues: Programmed cell death protein 1 (288 aa).

A signal peptide spans 1 to 24; it reads MQIPQAPWPVVWAVLQLGWRPGWF. A nivolumab binding region spans residues 25–34; the sequence is LDSPDRPWNP. At 25–170 the chain is on the extracellular side; it reads LDSPDRPWNP…RPAGQFQTLV (146 aa). One can recognise an Ig-like V-type domain in the interval 35–145; the sequence is PTFSPALLVV…ESLRAELRVT (111 aa). 4 N-linked (GlcNAc...) asparagine glycosylation sites follow: N49, N58, N74, and N116. The cysteines at positions 54 and 123 are disulfide-linked. The tract at residues 70-77 is interaction with CD274/PDCD1L1; that stretch reads MSPSNQTD. Positions 74 to 99 are pembrolizumab binding; it reads NQTDKLAAFPEDRSQPGQDCRFRVTQ. The helical transmembrane segment at 171–191 threads the bilayer; the sequence is VGVVGGLLGSLVLLVWVLAVI. Residues 192 to 288 lie on the Cytoplasmic side of the membrane; that stretch reads CSRAARGTIG…PEDGHCSWPL (97 aa). The short motif at 221–226 is the ITIM motif element; it reads VDYGEL. Y223 carries the post-translational modification Phosphotyrosine. K233 is covalently cross-linked (Glycyl lysine isopeptide (Lys-Gly) (interchain with G-Cter in ubiquitin)). Position 234 is a phosphothreonine; by MAPK3 (T234). The ITSM motif signature appears at 247–251; sequence EYATI. Phosphotyrosine is present on Y248. A disordered region spans residues 254 to 288; that stretch reads PSGMGTSSPARRGSADGPRSAQPLRPEDGHCSWPL. The span at 278 to 288 shows a compositional bias: basic and acidic residues; sequence RPEDGHCSWPL.

As to quaternary structure, monomer. Interacts with CD274/PDCD1L1. Interacts with CD273/PDCD1LG2. Interacts with FBXO38; leading to ubiquitination and degradation of PDCD1 by the proteasome. Ubiquitinated at Lys-233 by the SCF(FBXO38) complex, leading to its proteasomal degradation. Ubiquitinated via 'Lys-48'-linked polyubiquitin chains. Deubiquitinated and thus stabilized by USP5. Post-translationally, tyrosine phosphorylated at Tyr-223 (within ITIM motif) and Tyr-248 (ITSM motif) upon ligand binding. Phosphorylation at Tyr-248 promotes the recruitment of the protein tyrosine phosphatase PTPN11/SHP-2 that mediates dephosphorylation of key TCR proximal signaling molecules, such as ZAP70, PRKCQ/PKCtheta and CD247/CD3zeta. Phosphorylation at Thr-234 promotes the recruitment of the deubiquitinase USP5. In terms of processing, N-glycosylation at Asn-58 contains at least two N-acetylglucosamine units and one fucose. N-glycosylation does not affect binding to nivolumab drug.

It is found in the cell membrane. Inhibited by pembrolizumab (also named MK-3475 or lambrolizumab), a monoclonal antibody that prevents the interaction with CD274/PDCD1L1. Inhibited by nivolumab (also named ONO-4538, BMS-936558 or Opdivo), a monoclonal antibody that prevents the interaction with CD274/PDCD1L1. The interaction with nivolumab is not dependent on glycosylation and depends on a loop at the N-terminus (N-terminal loop, corresponding to residues 25-34). Targeting the interaction between PDCD1 and CD274/PDCD1L1 with pembrolizumab and nivolumab antibodies has demonstrated great promise as a strategy for controlling and eradicating cancer. Pembrolizumab and nivolumab are used for treatment of patients with advanced melanoma. These antibodies are also effective against other cancers, such as non-small cell lung cancer, renal cell carcinoma, bladder cancer and Hodgkin's lymphoma. In terms of biological role, inhibitory receptor on antigen activated T-cells that plays a critical role in induction and maintenance of immune tolerance to self. Delivers inhibitory signals upon binding to ligands CD274/PDCD1L1 and CD273/PDCD1LG2. Following T-cell receptor (TCR) engagement, PDCD1 associates with CD3-TCR in the immunological synapse and directly inhibits T-cell activation. Suppresses T-cell activation through the recruitment of PTPN11/SHP-2: following ligand-binding, PDCD1 is phosphorylated within the ITSM motif, leading to the recruitment of the protein tyrosine phosphatase PTPN11/SHP-2 that mediates dephosphorylation of key TCR proximal signaling molecules, such as ZAP70, PRKCQ/PKCtheta and CD247/CD3zeta. The PDCD1-mediated inhibitory pathway is exploited by tumors to attenuate anti-tumor immunity and escape destruction by the immune system, thereby facilitating tumor survival. The interaction with CD274/PDCD1L1 inhibits cytotoxic T lymphocytes (CTLs) effector function. The blockage of the PDCD1-mediated pathway results in the reversal of the exhausted T-cell phenotype and the normalization of the anti-tumor response, providing a rationale for cancer immunotherapy. This is Programmed cell death protein 1 from Homo sapiens (Human).